The primary structure comprises 138 residues: Putative pre-16S rRNA nuclease (138 aa).

Belongs to the YqgF nuclease family.

The protein resides in the cytoplasm. Could be a nuclease involved in processing of the 5'-end of pre-16S rRNA. In Porphyromonas gingivalis (strain ATCC BAA-308 / W83), this protein is Putative pre-16S rRNA nuclease.